The chain runs to 240 residues: SURF1-like protein (240 aa).

2 helical membrane-spanning segments follow: residues 7 to 23 and 201 to 219; these read VFIT…WQLS and YALT…YVIY.

The protein belongs to the SURF1 family.

It localises to the cell membrane. In Rickettsia conorii (strain ATCC VR-613 / Malish 7), this protein is SURF1-like protein.